A 331-amino-acid polypeptide reads, in one-letter code: DNA-directed RNA polymerase subunit alpha (331 aa).

The segment at 1-223 is alpha N-terminal domain (alpha-NTD); the sequence is MDQKRPQLKA…DELTVFGNVE (223 aa). The alpha C-terminal domain (alpha-CTD) stretch occupies residues 260-331; that stretch reads PYPADLDTPR…LAQFGLALRD (72 aa).

It belongs to the RNA polymerase alpha chain family. Homodimer. The RNAP catalytic core consists of 2 alpha, 1 beta, 1 beta' and 1 omega subunit. When a sigma factor is associated with the core the holoenzyme is formed, which can initiate transcription.

It catalyses the reaction RNA(n) + a ribonucleoside 5'-triphosphate = RNA(n+1) + diphosphate. Its function is as follows. DNA-dependent RNA polymerase catalyzes the transcription of DNA into RNA using the four ribonucleoside triphosphates as substrates. This Deinococcus geothermalis (strain DSM 11300 / CIP 105573 / AG-3a) protein is DNA-directed RNA polymerase subunit alpha.